The following is a 210-amino-acid chain: Tetraspanin-31 (210 aa).

Over 1 to 12 the chain is Cytoplasmic; sequence MVCGGFACSKNA. The helical transmembrane segment at 13–33 threads the bilayer; sequence LCALNVVYMLVGLLLIGVAAW. Over 34 to 44 the chain is Extracellular; it reads AKGLGLVSSIH. A helical membrane pass occupies residues 45 to 65; that stretch reads IIGGVIAVGVFLLLIAVAGLV. Topologically, residues 66-72 are cytoplasmic; that stretch reads GAVNHHQ. The helical transmembrane segment at 73–93 threads the bilayer; sequence VLLFFYMIILGLVFIFQFGIS. The Extracellular portion of the chain corresponds to 94 to 173; the sequence is CSCLAINLSK…FLKHSDEALK (80 aa). Asn-100, Asn-109, Asn-117, and Asn-134 each carry an N-linked (GlcNAc...) asparagine glycan. Residues 174 to 194 traverse the membrane as a helical segment; sequence ILGGVGLFFSFTEILGVWLAM. Over 195-210 the chain is Cytoplasmic; that stretch reads RFRNQKDPRANPSAFL.

The protein belongs to the tetraspanin (TM4SF) family.

The protein resides in the membrane. This chain is Tetraspanin-31 (TSPAN31), found in Bos taurus (Bovine).